Reading from the N-terminus, the 531-residue chain is Light-independent protochlorophyllide reductase subunit B (531 aa).

[4Fe-4S] cluster is bound at residue Asp36. The Proton donor role is filled by Asp296. 431 to 432 is a substrate binding site; it reads GM.

Belongs to the ChlB/BchB/BchZ family. In terms of assembly, protochlorophyllide reductase is composed of three subunits; ChlL, ChlN and ChlB. Forms a heterotetramer of two ChlB and two ChlN subunits. [4Fe-4S] cluster serves as cofactor.

The protein resides in the plastid. It is found in the chloroplast. The enzyme catalyses chlorophyllide a + oxidized 2[4Fe-4S]-[ferredoxin] + 2 ADP + 2 phosphate = protochlorophyllide a + reduced 2[4Fe-4S]-[ferredoxin] + 2 ATP + 2 H2O. It participates in porphyrin-containing compound metabolism; chlorophyll biosynthesis (light-independent). Its function is as follows. Component of the dark-operative protochlorophyllide reductase (DPOR) that uses Mg-ATP and reduced ferredoxin to reduce ring D of protochlorophyllide (Pchlide) to form chlorophyllide a (Chlide). This reaction is light-independent. The NB-protein (ChlN-ChlB) is the catalytic component of the complex. The polypeptide is Light-independent protochlorophyllide reductase subunit B (Nephroselmis olivacea (Green alga)).